The sequence spans 254 residues: Fructose-1,6-bisphosphatase (254 aa).

Glu68, Asp84, Leu86, and Asp87 together coordinate Mg(2+). Substrate is bound by residues 87-89 (DGS), Arg171, Ile176, and Arg195. Asp202 serves as a coordination point for Mg(2+).

This sequence belongs to the inositol monophosphatase superfamily. FBPase class 4 family. Homodimer. Mg(2+) serves as cofactor.

It catalyses the reaction beta-D-fructose 1,6-bisphosphate + H2O = beta-D-fructose 6-phosphate + phosphate. Its activity is regulated as follows. Inhibited by Li(+), ADP, ATP and glucose-6-phosphate. In terms of biological role, catalyzes the conversion of D-fructose 1,6-bisphosphate to D-fructose 6-phosphate. In vitro, also has weak activity with inositol-1-phosphate, glucose-1-phosphate and glycerol-2-phosphate. In Pyrococcus furiosus (strain ATCC 43587 / DSM 3638 / JCM 8422 / Vc1), this protein is Fructose-1,6-bisphosphatase.